The chain runs to 57 residues: UPF0391 membrane protein Smed_4051 (57 aa).

A run of 2 helical transmembrane segments spans residues 4-24 and 33-53; these read WALI…SGIS and ILFY…LAVG.

The protein belongs to the UPF0391 family.

It localises to the cell membrane. The polypeptide is UPF0391 membrane protein Smed_4051 (Sinorhizobium medicae (strain WSM419) (Ensifer medicae)).